The following is a 364-amino-acid chain: D-alanine--D-alanine ligase (364 aa).

One can recognise an ATP-grasp domain in the interval 146 to 352; the sequence is KLCAMNAGIA…FAELVEKLLL (207 aa). 179-234 lines the ATP pocket; that stretch reads TKRFDWPLFVKPASLGSSVGISKVRNAEELAAALENACGLDSKALVEAAISGREIE. Asp-305, Glu-319, and Asn-321 together coordinate Mg(2+).

The protein belongs to the D-alanine--D-alanine ligase family. Mg(2+) is required as a cofactor. Requires Mn(2+) as cofactor.

The protein localises to the cytoplasm. It carries out the reaction 2 D-alanine + ATP = D-alanyl-D-alanine + ADP + phosphate + H(+). It functions in the pathway cell wall biogenesis; peptidoglycan biosynthesis. Functionally, cell wall formation. The polypeptide is D-alanine--D-alanine ligase (Chlorobaculum tepidum (strain ATCC 49652 / DSM 12025 / NBRC 103806 / TLS) (Chlorobium tepidum)).